A 464-amino-acid polypeptide reads, in one-letter code: tRNA-2-methylthio-N(6)-dimethylallyladenosine synthase (464 aa).

The 118-residue stretch at 5-122 (RKLYVKSFGC…LPEMLARVRD (118 aa)) folds into the MTTase N-terminal domain. Residues cysteine 14, cysteine 50, cysteine 85, cysteine 163, cysteine 167, and cysteine 170 each coordinate [4Fe-4S] cluster. The Radical SAM core domain maps to 149–383 (KKRGPTAFVT…VLEASKTAFD (235 aa)). The TRAM domain occupies 384–446 (RACMGRRFDI…PNSLAGQVVD (63 aa)).

This sequence belongs to the methylthiotransferase family. MiaB subfamily. In terms of assembly, monomer. [4Fe-4S] cluster is required as a cofactor.

It is found in the cytoplasm. It catalyses the reaction N(6)-dimethylallyladenosine(37) in tRNA + (sulfur carrier)-SH + AH2 + 2 S-adenosyl-L-methionine = 2-methylsulfanyl-N(6)-dimethylallyladenosine(37) in tRNA + (sulfur carrier)-H + 5'-deoxyadenosine + L-methionine + A + S-adenosyl-L-homocysteine + 2 H(+). Its function is as follows. Catalyzes the methylthiolation of N6-(dimethylallyl)adenosine (i(6)A), leading to the formation of 2-methylthio-N6-(dimethylallyl)adenosine (ms(2)i(6)A) at position 37 in tRNAs that read codons beginning with uridine. The chain is tRNA-2-methylthio-N(6)-dimethylallyladenosine synthase from Azorhizobium caulinodans (strain ATCC 43989 / DSM 5975 / JCM 20966 / LMG 6465 / NBRC 14845 / NCIMB 13405 / ORS 571).